Reading from the N-terminus, the 106-residue chain is Cytochrome c oxidase assembly protein COX16 homolog, mitochondrial (106 aa).

Over 1 to 15 (MIAPAVLRALRKNKT) the chain is Mitochondrial matrix. A helical transmembrane segment spans residues 16–33 (LRYGVPMLLLVVGGSFGL). At 34–106 (REFSQIRYDA…NPETLKPKTT (73 aa)) the chain is on the mitochondrial intermembrane side. The interval 81 to 106 (IRGPRPWEDPQLLQGRNPETLKPKTT) is disordered.

It belongs to the COX16 family. Associates with the MITRAC complex. Interacts with MT-CO2/COX; specifically interacts with newly synthesized MT-CO2/COX. Interacts with SCO1, SCO2 and COA6.

It localises to the mitochondrion inner membrane. Its function is as follows. Required for the assembly of the mitochondrial respiratory chain complex IV (CIV), also known as cytochrome c oxidase. Promotes the insertion of copper into the active site of cytochrome c oxidase subunit II (MT-CO2/COX2). Interacts specifically with newly synthesized MT-CO2/COX and its copper center-forming metallochaperones SCO1, SCO2 and COA6. Probably facilitates MT-CO2/COX2 association with the MITRAC assembly intermediate containing MT-CO1/COX1, thereby participating in merging the MT-CO1/COX1 and MT-CO2/COX2 assembly lines. The protein is Cytochrome c oxidase assembly protein COX16 homolog, mitochondrial of Mus musculus (Mouse).